A 347-amino-acid chain; its full sequence is 3-isopropylmalate dehydrogenase (347 aa).

Residue 76–87 (GPKWTDPNNRPE) participates in NAD(+) binding. The substrate site is built by arginine 94, arginine 104, arginine 132, and aspartate 217. 3 residues coordinate Mg(2+): aspartate 217, aspartate 241, and aspartate 245. 275-287 (GSAPDIANEDKAN) serves as a coordination point for NAD(+).

This sequence belongs to the isocitrate and isopropylmalate dehydrogenases family. LeuB type 1 subfamily. In terms of assembly, homodimer. The cofactor is Mg(2+). Requires Mn(2+) as cofactor.

It localises to the cytoplasm. It catalyses the reaction (2R,3S)-3-isopropylmalate + NAD(+) = 4-methyl-2-oxopentanoate + CO2 + NADH. It functions in the pathway amino-acid biosynthesis; L-leucine biosynthesis; L-leucine from 3-methyl-2-oxobutanoate: step 3/4. Catalyzes the oxidation of 3-carboxy-2-hydroxy-4-methylpentanoate (3-isopropylmalate) to 3-carboxy-4-methyl-2-oxopentanoate. The product decarboxylates to 4-methyl-2 oxopentanoate. The chain is 3-isopropylmalate dehydrogenase from Staphylococcus epidermidis (strain ATCC 12228 / FDA PCI 1200).